Reading from the N-terminus, the 1066-residue chain is Phosphatidylinositol 4-kinase PIK1 (1066 aa).

The PIK helical domain maps to 1–133; sequence MHKASSSKKS…GFQVARRVLN (133 aa). 2 positions are modified to phosphoserine: Ser-10 and Ser-236. Disordered stretches follow at residues 218–240, 303–411, and 564–624; these read KKTS…PIDL, DGKN…KKAN, and NENR…LGDM. The segment covering 342 to 356 has biased composition (acidic residues); that stretch reads NNEDETGGETEEDAD. Polar residues-rich tracts occupy residues 374 to 411 and 570 to 597; these read QPRT…KKAN and STLT…NEGL. The residue at position 384 (Ser-384) is a Phosphoserine. Thr-394 is subject to Phosphothreonine. A phosphoserine mark is found at Ser-396 and Ser-592. Low complexity predominate over residues 598–609; sequence SSTSRSDSASTA. One can recognise a PI3K/PI4K catalytic domain in the interval 770 to 1049; that stretch reads ATKKERIRKT…FLIGKSLGSI (280 aa). The tract at residues 776–782 is G-loop; that stretch reads IRKTSEY. A catalytic loop region spans residues 915 to 923; the sequence is QVKDRHNGN. Residues 934–958 form an activation loop region; the sequence is HIDFGFMLSNSPGSVGFEAAPFKLT.

The protein belongs to the PI3/PI4-kinase family. Type III PI4K subfamily. In terms of assembly, interacts with FRQ1.

It localises to the nucleus. Its subcellular location is the golgi apparatus. The protein localises to the trans-Golgi network. The catalysed reaction is a 1,2-diacyl-sn-glycero-3-phospho-(1D-myo-inositol) + ATP = a 1,2-diacyl-sn-glycero-3-phospho-(1D-myo-inositol 4-phosphate) + ADP + H(+). In terms of biological role, acts on phosphatidylinositol (PI) in the first committed step in the production of the second messenger inositol 1,4,5,-trisphosphate. PIK1 is part of a nuclear phosphoinositide cycle and could control cytokinesis through the actin cytoskeleton. Involved in the response to mating pheromone. This chain is Phosphatidylinositol 4-kinase PIK1, found in Saccharomyces cerevisiae (strain ATCC 204508 / S288c) (Baker's yeast).